Consider the following 282-residue polypeptide: Protoheme IX farnesyltransferase (282 aa).

9 helical membrane passes run leucine 9–alanine 29, leucine 39–phenylalanine 59, leucine 79–leucine 99, leucine 102–valine 122, valine 139–isoleucine 159, leucine 165–leucine 185, isoleucine 210–serine 230, alanine 231–isoleucine 251, and valine 261–methionine 281.

It belongs to the UbiA prenyltransferase family. Protoheme IX farnesyltransferase subfamily.

Its subcellular location is the cell inner membrane. It carries out the reaction heme b + (2E,6E)-farnesyl diphosphate + H2O = Fe(II)-heme o + diphosphate. The protein operates within porphyrin-containing compound metabolism; heme O biosynthesis; heme O from protoheme: step 1/1. In terms of biological role, converts heme B (protoheme IX) to heme O by substitution of the vinyl group on carbon 2 of heme B porphyrin ring with a hydroxyethyl farnesyl side group. This is Protoheme IX farnesyltransferase from Francisella tularensis subsp. tularensis (strain FSC 198).